A 287-amino-acid chain; its full sequence is Diaminopimelate epimerase (287 aa).

Substrate is bound by residues Asn11, Gln44, and Asn64. Cys73 (proton donor) is an active-site residue. Residues 74–75, Asn157, Asn190, and 208–209 contribute to the substrate site; these read GN and ER. The active-site Proton acceptor is the Cys217. Residue 218–219 participates in substrate binding; that stretch reads GT.

Belongs to the diaminopimelate epimerase family. Homodimer.

It localises to the cytoplasm. The catalysed reaction is (2S,6S)-2,6-diaminopimelate = meso-2,6-diaminopimelate. The protein operates within amino-acid biosynthesis; L-lysine biosynthesis via DAP pathway; DL-2,6-diaminopimelate from LL-2,6-diaminopimelate: step 1/1. In terms of biological role, catalyzes the stereoinversion of LL-2,6-diaminopimelate (L,L-DAP) to meso-diaminopimelate (meso-DAP), a precursor of L-lysine and an essential component of the bacterial peptidoglycan. This is Diaminopimelate epimerase from Halorhodospira halophila (strain DSM 244 / SL1) (Ectothiorhodospira halophila (strain DSM 244 / SL1)).